We begin with the raw amino-acid sequence, 1288 residues long: 5-oxoprolinase (1288 aa).

Residues 1248–1270 (PGGGGYGDPEDPAPPPGSPPLFP) form a disordered region. Residues 1259–1270 (PAPPPGSPPLFP) show a composition bias toward pro residues. Serine 1265 carries the phosphoserine modification.

Belongs to the oxoprolinase family. Homodimer. As to expression, expressed in testis, kidney and liver.

The protein resides in the cytoplasm. Its subcellular location is the cytosol. It carries out the reaction 5-oxo-L-proline + ATP + 2 H2O = L-glutamate + ADP + phosphate + H(+). Its function is as follows. Catalyzes the cleavage of 5-oxo-L-proline to form L-glutamate coupled to the hydrolysis of ATP to ADP and inorganic phosphate. This Rattus norvegicus (Rat) protein is 5-oxoprolinase (Oplah).